We begin with the raw amino-acid sequence, 505 residues long: MRLRRLALFPGVALLLAAARLAAASDVLELTDDNFESRISDTGSAGLMLVEFFAPWCGHCKRLAPEYEAAATRLKGIVPLAKVDCTANTNTCNKYGVSGYPTLKIFRDGEEAGAYDGPRTADGIVSHLKKQAGPASVPLRTEEEFKKFISDKDASIVGFFDDSFSEAHSEFLKAASNLRDNYRFAHTNVESLVNEYDDNGEGIILFRPSHLTNKFEDKTVAYTEQKMTSGKIKKFIQENIFGICPHMTEDNKDLIQGKDLLIAYYDVDYEKNAKGSNYWRNRVMMVAKKFLDAGHKLNFAVASRKTFSHELSDFGLESTAGEIPVVAIRTAKGEKFVMQEEFSRDGKALERFLQDYFDGNLKRYLKSEPIPESNDGPVKVVVAENFDEIVNNENKDVLIEFYAPWCGHCKNLEPKYKELGEKLSKDPNIVIAKMDATANDVPSPYEVRGFPTIYFSPANKKLNPKKYEGGRELSDFISYLQREATNPPVIQEEKPKKKKKAQEDL.

Residues Met1 to Ala24 form the signal peptide. Residues Ser25–Gly133 enclose the Thioredoxin 1 domain. Active-site nucleophile residues include Cys57 and Cys60. Cys57 and Cys60 are joined by a disulfide. An N6-methyllysine modification is found at Lys61. A disulfide bridge links Cys85 with Cys92. Lys129 bears the N6-succinyllysine mark. Lys152 is modified (N6-acetyllysine). N6-succinyllysine is present on Lys218. Lys252 carries the N6-acetyllysine modification. At Thr319 the chain carries Phosphothreonine. Residues Ser343–Thr485 form the Thioredoxin 2 domain. Lys362 carries the post-translational modification N6-acetyllysine. Active-site nucleophile residues include Cys406 and Cys409. Residues Cys406 and Cys409 are joined by a disulfide bond. The tract at residues Ala484–Leu505 is disordered. Over residues Gln491–Leu505 the composition is skewed to basic and acidic residues. Lys494 is subject to N6-acetyllysine. Positions Gln502–Leu505 match the Prevents secretion from ER motif.

Part of the major histocompatibility complex class I (MHC I) peptide loading complex composed of TAP1, TAP2, B2M, MHC heavy chain, TAPBP, PDIA3, and CALR. Interacts with ERP27 and CANX. Interacts with SERPINA2 and with the S and Z variants of SERPINA1. Interacts with ATP2A2. In terms of processing, within the major histocompatibility complex class I (MHC I) peptide loading complex forms reversible disulfide-linked heterodimers with TAPBP as part of its protein folding chaperone activity. This is essential to assist the dynamic assembly of the MHC I complex with high affinity antigens in the endoplasmic reticulum. Phosphorylated. As to expression, detected in the flagellum and head region of spermatozoa (at protein level). Expressed in liver, stomach and colon (at protein level). Expressed in gastric parietal cells and chief cells (at protein level).

The protein localises to the endoplasmic reticulum. It localises to the endoplasmic reticulum lumen. The protein resides in the melanosome. It catalyses the reaction Catalyzes the rearrangement of -S-S- bonds in proteins.. Its activity is regulated as follows. Association with calcitriol does not affect its enzymatic activity. Its function is as follows. Protein disulfide isomerase that catalyzes the formation, isomerization, and reduction or oxidation of disulfide bonds in client proteins and functions as a protein folding chaperone. Core component of the major histocompatibility complex class I (MHC I) peptide loading complex where it functions as an essential folding chaperone for TAPBP. Through TAPBP, assists the dynamic assembly of the MHC I complex with high affinity antigens in the endoplasmic reticulum. Therefore, plays a crucial role in the presentation of antigens to cytotoxic T cells in adaptive immunity. The protein is Protein disulfide-isomerase A3 of Homo sapiens (Human).